The following is a 324-amino-acid chain: Transcription factor TCP24 (324 aa).

The TCP domain occupies 50-108 (GKDRHSKVLTSKGLRDRRIRLSVATAIQFYDLQDRLGFDQPSKAVEWLINAASDSITDL). 2 disordered regions span residues 122–215 (QNQT…PMNH) and 261–297 (QRSS…NHQL). Residues 127–142 (SACSSGTSESSLLSLS) are compositionally biased toward low complexity. The region spanning 144 to 162 (TEIRGKARERARERTAKDR) is the R domain. Residues 144-167 (TEIRGKARERARERTAKDRDKDLQ) show a composition bias toward basic and acidic residues. Polar residues-rich tracts occupy residues 168-192 (NAHS…NWTG) and 200-212 (VQLQ…SQEP). The segment covering 261 to 281 (QRSSISSSSSSSSPMDSQSIS) has biased composition (low complexity).

As to quaternary structure, forms a heterodimeric complex with ABAP1. Interacts with SPL. Expressed in cotyledons, particularly in the vascular region, in leaves, roots, stems, buds, flowers and siliques.

It is found in the nucleus. Plays a pivotal role in the control of morphogenesis of shoot organs by negatively regulating the expression of boundary-specific genes such as CUC genes, probably through the induction of miRNA (e.g. miR164). In association with ABAP1, exerts a negative role in cell proliferation in leaves, possibly by inhibiting mitotic DNA replication. Participates in ovule development. This is Transcription factor TCP24 (TCP24) from Arabidopsis thaliana (Mouse-ear cress).